We begin with the raw amino-acid sequence, 381 residues long: MNNKKKIVKIFFYDKILFFLLISLSIIGIIIVSSASISFGIRLHNDYFYFAKRNLLYFFLSFFLFFQIIRIPINQLEKYNKIALLINLFLLIIVFIIGNSINGAIRWIKIGFFSIQPSECSKLILFFYISDYIVKKNKELKNKLWGFLKPIIIMLIFVILLLMQPDLGNSLILFLTTLLLFFLAGINLWKCCFMFLFGLLTIFILIIFKPYRIRRILSFLDPWEDPFNSGYQLTQSLMALGRGKIIGTGLGNSIQKLEYLPEAYTDFIFSILGEELGYIGSIIILIMLFFVIFRIFLIGKNSFIQKKFFSGYFSFSVGIWISLQTIMNVGGVIGILPIKGLTLPFISYGGSSLITIFSAIAIVIRSDFELRINKYQAYLKQ.

The Cytoplasmic portion of the chain corresponds to 1 to 15 (MNNKKKIVKIFFYDK). Residues 16-36 (ILFFLLISLSIIGIIIVSSAS) form a helical membrane-spanning segment. The Periplasmic portion of the chain corresponds to 37 to 53 (ISFGIRLHNDYFYFAKR). Residues 54–74 (NLLYFFLSFFLFFQIIRIPIN) form a helical membrane-spanning segment. The Cytoplasmic portion of the chain corresponds to 75–81 (QLEKYNK). A helical transmembrane segment spans residues 82 to 102 (IALLINLFLLIIVFIIGNSIN). The Periplasmic portion of the chain corresponds to 103–109 (GAIRWIK). The chain crosses the membrane as a helical span at residues 110–130 (IGFFSIQPSECSKLILFFYIS). The Cytoplasmic segment spans residues 131–143 (DYIVKKNKELKNK). A helical membrane pass occupies residues 144–164 (LWGFLKPIIIMLIFVILLLMQ). The Periplasmic segment spans residues 165–166 (PD). 2 helical membrane-spanning segments follow: residues 167–187 (LGNSLILFLTTLLLFFLAGIN) and 188–208 (LWKCCFMFLFGLLTIFILIIF). Topologically, residues 209–278 (KPYRIRRILS…FSILGEELGY (70 aa)) are periplasmic. The chain crosses the membrane as a helical span at residues 279–299 (IGSIIILIMLFFVIFRIFLIG). At 300–317 (KNSFIQKKFFSGYFSFSV) the chain is on the cytoplasmic side. Residues 318–338 (GIWISLQTIMNVGGVIGILPI) traverse the membrane as a helical segment. Over 339–343 (KGLTL) the chain is Periplasmic. Residues 344–364 (PFISYGGSSLITIFSAIAIVI) traverse the membrane as a helical segment. Topologically, residues 365–381 (RSDFELRINKYQAYLKQ) are cytoplasmic.

Belongs to the SEDS family. FtsW subfamily.

The protein resides in the cell inner membrane. The enzyme catalyses [GlcNAc-(1-&gt;4)-Mur2Ac(oyl-L-Ala-gamma-D-Glu-L-Lys-D-Ala-D-Ala)](n)-di-trans,octa-cis-undecaprenyl diphosphate + beta-D-GlcNAc-(1-&gt;4)-Mur2Ac(oyl-L-Ala-gamma-D-Glu-L-Lys-D-Ala-D-Ala)-di-trans,octa-cis-undecaprenyl diphosphate = [GlcNAc-(1-&gt;4)-Mur2Ac(oyl-L-Ala-gamma-D-Glu-L-Lys-D-Ala-D-Ala)](n+1)-di-trans,octa-cis-undecaprenyl diphosphate + di-trans,octa-cis-undecaprenyl diphosphate + H(+). It functions in the pathway cell wall biogenesis; peptidoglycan biosynthesis. Its function is as follows. Peptidoglycan polymerase that is essential for cell division. The polypeptide is Probable peptidoglycan glycosyltransferase FtsW (Wigglesworthia glossinidia brevipalpis).